The sequence spans 798 residues: MENKESVLLELVPKIKAYIKDDTVKEKSYQDFIEKNKELFICNLYNVNMITDEDIKLLYITIEQNIDIDDKSLVAIFSYIGYNFEKNIHDDNSSIDLGDRMTGDMNYNMYDTFFSTLDFIIRQKHVNILVNDEGNNDFNINYRSFTTSLSYKEDKYEQVVNEIPFNMKELLSYVSKNLDQLRFSKKYLDFAYLCRNIGIKISKRKYNVRYIFNYVIDELTIPIVIKDYLDVKYVYLEETNKAYRNNFDNDNKYFYEWGKVIIPKFKNPRLYSYFFLSNYGLCDLFMELINIKQVTFEPRKNPIEYIYVSELKFWEEGGSVDFVPCEHEIAIIDAKKVSLEYYENINKFIAKYIYYEDGLAYCNLCGINIQELNLDATDVTKISLINVTYNKSIFMSEPYNYFSHSQRFIFNTIMSFDTIMKSQMWNMKYNINRLILNFLIDINSKRHEYEKQFATEIKKGIFFLRLSANLFDIQMSSMELFYSAKILNIHFIVALVIVLNSGADFIMYYMTNKKEETNYSDLNHIISVIVFDFLKKTRTVDSKQFNTIELFTETYMKIATEELIVHYNRIKLEMERLIAIKKDRKTPNYDISIYRQIQRTDEIAFFPSCITSTKLFITYEKVVAENTEIITIKHPVRIKEGTDEDKEIFEDIMKKTTKVLIRVNDTNAYNASFFTTHIKLEVEKKKIIIPLTSLFVYNVLKYYSSNVDFYVFKFGDPFPFHYDLISQEHTNHKITGYNMLRQELLPNSNVFTYFSDSLNRQELEFSFYMFLASYVNVTEWIEENSKKIKELYIINFNN.

The interval 1 to 195 (MENKESVLLE…KYLDFAYLCR (195 aa)) is interaction with NPH-I; required for transcription termination. The interval 234–254 (VYLEETNKAYRNNFDNDNKYF) is interaction with J3.

It belongs to the poxviridae protein RAP94 family. In terms of assembly, part of the early transcription complex composed of ETF, RAP94, and the DNA-directed RNA polymerase. Interacts (via N-terminus) with NPH-I. Interacts with J3. Interacts with ETF heterodimer.

It is found in the virion. In terms of biological role, DNA-directed RNA polymerase-associated factor required for the transcription of viral early genes as well as for transcription termination. Within minutes after virus entry, recruits the core RNA polymerase, the early transcription factor (ETF) and other enzymes needed for transcription initiation, elongation, and termination thereby allowing synthesis of early mRNAs which are extruded through pores in the core particle. Recruits the multifunctional J3 protein, with poly(A) polymerase-stimulatory, cap nucleoside-2'-O-methyltransferase, and transcription elongation activities. Interacts with NPH-I, a DNA-dependent ATPase required for the termination of early transcripts. Acts as a transcription termination factor by binding, together with the capping enzyme/VTF, to the termination motif 5'-UUUUUNU-3' in the nascent mRNA. Involved as well in the packaging of RNA polymerase and other components needed for early transcription in assembling virus particles. The polypeptide is RNA polymerase-associated transcription-specificity factor RAP94 (RAP94) (Vertebrata (FPV)).